The following is a 326-amino-acid chain: Nucleotide sugar transporter SLC35D2 (326 aa).

At 1 to 15 the chain is on the extracellular side; sequence MEEPNAAPLPSRLAR. A helical transmembrane segment spans residues 16–36; the sequence is LLSALFYGTCSFLIVLVNKAL. Residues 37-41 are Cytoplasmic-facing; sequence LTTYG. A helical membrane pass occupies residues 42–62; sequence FPSPIVLGIGQMATTIMILYV. The Extracellular segment spans residues 63–130; the sequence is FKLNKIIHFP…LLEAIILGTQ (68 aa). A helical membrane pass occupies residues 131 to 151; it reads YSLNIILSVLAIVLGAFIAAG. Residues 152 to 155 lie on the Cytoplasmic side of the membrane; it reads SDLT. A helical transmembrane segment spans residues 156-176; that stretch reads FNLEGYVFVFLNDIFTAANGV. Residues 177 to 189 are Extracellular-facing; that stretch reads YTKQKMDPKELGK. A helical transmembrane segment spans residues 190–210; that stretch reads YGVLFYNACFMLIPTVIISVS. Residues 211-225 are Cytoplasmic-facing; that stretch reads TGDFQQATEFRHWKN. A helical membrane pass occupies residues 226–246; sequence VLFIIQFLLSCLLGFLLMYST. At 247 to 253 the chain is on the extracellular side; sequence ALCSYYN. Residues 254–276 form a helical membrane-spanning segment; sequence SALTTAVVGAIKNVSVAYIGMLV. Residues 277 to 280 are Cytoplasmic-facing; it reads GGDY. Residues 281–303 traverse the membrane as a helical segment; the sequence is IFSLLNFIGLNICMAGGLRYSFL. Over 304-326 the chain is Extracellular; that stretch reads TLSSQLKPKQPVDEESIPLDLKS.

It belongs to the TPT transporter family. SLC35D subfamily.

Its subcellular location is the golgi apparatus membrane. It catalyses the reaction UMP(out) + UDP-N-acetyl-alpha-D-glucosamine(in) = UMP(in) + UDP-N-acetyl-alpha-D-glucosamine(out). The catalysed reaction is UMP(out) + UDP-alpha-D-glucose(in) = UMP(in) + UDP-alpha-D-glucose(out). In terms of biological role, nucleotide sugar antiporter transporting UDP-N-acetylglucosamine (UDP-GlcNAc) and UDP-glucose (UDP-Glc) from the cytosol into the lumen of the Golgi in exchange of UMP. By supplying UDP-N-acetylglucosamine, a donor substrate to heparan sulfate synthases, probably takes part in the synthesis of these glycoconjugates. The chain is Nucleotide sugar transporter SLC35D2 from Mus musculus (Mouse).